The following is a 151-amino-acid chain: MSLQFNSIALLLVSLILLGVLGNNSSITISATILLLMQQTFLAKYIPFTEKYGVNIGIIILTIGVLSPIVSGKVQLPNWTALIHWKMFLAMAVGVLVAWFGGRGVNLMGTQPSLLTGLLVGTILGVAFLGGVPVGPLIAAGILSLFIGKTG.

The next 4 membrane-spanning stretches (helical) occupy residues 1–21, 52–72, 81–101, and 123–143; these read MSLQ…LGVL, YGVN…IVSG, ALIH…AWFG, and ILGV…AGIL.

Belongs to the UPF0756 family.

Its subcellular location is the cell membrane. The polypeptide is UPF0756 membrane protein HS_0993 (Histophilus somni (strain 129Pt) (Haemophilus somnus)).